Here is a 224-residue protein sequence, read N- to C-terminus: uncharacterized protein (224 aa).

Its subcellular location is the virion. This is an uncharacterized protein from Acanthamoeba polyphaga mimivirus (APMV).